A 1090-amino-acid chain; its full sequence is Protein unc-13 homolog D (1090 aa).

Residues 92-239 (EPEEHQQTLQ…FKEARKDKGQ (148 aa)) form the C2 1 domain. Aspartate 127 and aspartate 133 together coordinate Ca(2+). A Phosphoserine modification is found at serine 150. Ca(2+)-binding residues include aspartate 206 and aspartate 208. The interaction with RAB27A stretch occupies residues 240 to 543 (DDFLGNVVLR…AKRVQDHTTV (304 aa)). One can recognise an MHD1 domain in the interval 557–677 (FQLYISLKEL…RLALVYCSLI (121 aa)). The MHD2 domain maps to 788–895 (EDAILPLMKF…ASSRELIRKY (108 aa)). The C2 2 domain occupies 910–1035 (ELGAVTVKAS…PGLSGSEEPG (126 aa)). The Ca(2+) site is built by leucine 940, aspartate 941, aspartate 947, aspartate 1005, aspartate 1007, and aspartate 1013. A disordered region spans residues 1026–1048 (PGLSGSEEPGEVPQTRLPLTYPA).

This sequence belongs to the unc-13 family. Interacts with DOC2A. Interacts with RAB27A. Interacts with RHOG; the interaction increases RhoG affinity to the membrane lipids, targets UNC13D to membrane lipids and facilitates cytotoxic granule (CG) docking to the plasma membrane. The cofactor is Ca(2+). Expressed at high levels in spleen, thymus and leukocytes. Also expressed in lung and placenta, and at very low levels in brain, heart, skeletal muscle and kidney. Expressed in cytotoxic T-lymphocytes (CTL) and mast cells.

It is found in the cytoplasm. It localises to the membrane. The protein resides in the late endosome. Its subcellular location is the recycling endosome. The protein localises to the lysosome. Functionally, plays a role in cytotoxic granule exocytosis in lymphocytes. Required for both granule maturation and granule docking and priming at the immunologic synapse. Regulates assembly of recycling and late endosomal structures, leading to the formation of an endosomal exocytic compartment that fuses with perforin-containing granules at the immunologic synapse and licences them for exocytosis. Regulates Ca(2+)-dependent secretory lysosome exocytosis in mast cells. The chain is Protein unc-13 homolog D (UNC13D) from Homo sapiens (Human).